Consider the following 172-residue polypeptide: 3-phenylpropionate/cinnamic acid dioxygenase subunit beta (172 aa).

Belongs to the bacterial ring-hydroxylating dioxygenase beta subunit family. As to quaternary structure, this dioxygenase system consists of four proteins: the two subunits of the hydroxylase component (HcaE and HcaF), a ferredoxin (HcaC) and a ferredoxin reductase (HcaD).

The enzyme catalyses 3-phenylpropanoate + NADH + O2 + H(+) = 3-(cis-5,6-dihydroxycyclohexa-1,3-dien-1-yl)propanoate + NAD(+). The catalysed reaction is (E)-cinnamate + NADH + O2 + H(+) = (2E)-3-(cis-5,6-dihydroxycyclohexa-1,3-dien-1-yl)prop-2-enoate + NAD(+). It functions in the pathway aromatic compound metabolism; 3-phenylpropanoate degradation. Functionally, part of the multicomponent 3-phenylpropionate dioxygenase. Converts 3-phenylpropionic acid (PP) and cinnamic acid (CI) into 3-phenylpropionate-dihydrodiol (PP-dihydrodiol) and cinnamic acid-dihydrodiol (CI-dihydrodiol), respectively. This is 3-phenylpropionate/cinnamic acid dioxygenase subunit beta from Escherichia coli O7:K1 (strain IAI39 / ExPEC).